Consider the following 427-residue polypeptide: BSD domain-containing protein 1 (427 aa).

Phosphoserine is present on residues serine 92 and serine 166. Residues 146–198 (WLSEFCLEEKKGEISELLVGSPSIRALYTKMVPAAVSHSEFWHRYFYKVHQLE) enclose the BSD domain. The tract at residues 208–397 (KQRADQSISE…ISEDWEKDFD (190 aa)) is disordered. The segment covering 219-229 (PGWEEEEEELE) has biased composition (acidic residues). Residues 236–245 (KEAKIPKETK) show a composition bias toward basic and acidic residues. Residues 268 to 279 (PAEATPSESSES) are compositionally biased toward low complexity. The segment covering 324–333 (GPPPPPPSKP) has biased composition (pro residues). Basic and acidic residues predominate over residues 347-364 (PPARVETLREEVPTDLRV). Phosphothreonine is present on threonine 353. Residues 368–387 (NSDSGKSTPSNNGKKGSSTD) are compositionally biased toward polar residues. Serine 384 and serine 385 each carry phosphoserine. Residues 388 to 397 (ISEDWEKDFD) show a composition bias toward acidic residues. Serine 415 carries the phosphoserine modification.

The chain is BSD domain-containing protein 1 (Bsdc1) from Mus musculus (Mouse).